The following is a 966-amino-acid chain: SH3 domain-binding protein 4 (966 aa).

The 60-residue stretch at 57–116 (GAAREVVAIKDCCPSSFTTLKFSKGDRLYVLDSSGAEWWYAHNNTEMGYIPAAYVEPINY) folds into the SH3 1 domain. Residues 322 to 457 (TNIVCRLDSS…LEPCMYVCVV (136 aa)) form the ZU5 domain. The region spanning 657 to 727 (NNLKFGKLIK…HAKNVLVVGK (71 aa)) is the SH3 2 domain.

As to quaternary structure, homodimer or homooligomer.

The protein localises to the membrane. It localises to the clathrin-coated pit. Its subcellular location is the cytoplasmic vesicle. The protein resides in the clathrin-coated vesicle. It is found in the nucleus. Its function is as follows. Possible role in regulating endocytosis of the transferrin receptor at the plasma membrane. Alternatively, may function as a negative regulator of the amino acid-induced TOR signaling by inhibiting the formation of active Rag GTPase complexes. Preferentially binds inactive Rag GTPase complexes and prevents their interaction with the mTORC1 complex inhibiting its relocalization to lysosomes and its activation. Thereby, may indirectly regulate cell growth, proliferation and autophagy. The polypeptide is SH3 domain-binding protein 4 (sh3bp4) (Seriola quinqueradiata (Five-ray yellowtail)).